Here is a 344-residue protein sequence, read N- to C-terminus: Outer membrane protein assembly factor BamC (344 aa).

A signal peptide spans 1–24; the sequence is MAYSVQKSRLAKVAGVSLVLLLAA. Residue Cys25 is the site of N-palmitoyl cysteine attachment. Residue Cys25 is the site of S-diacylglycerol cysteine attachment.

This sequence belongs to the BamC family. Part of the Bam complex, which is composed of the outer membrane protein BamA, and four lipoproteins BamB, BamC, BamD and BamE. Forms a subcomplex with BamD and BamE. The Bam complex has the shape of a hat, with the BamA beta-barrel crown in the outer membrane and the periplasmic brim formed by the BamA POTRA domains and the 4 lipoproteins.

It is found in the cell outer membrane. Part of the outer membrane protein assembly complex (Bam), which is involved in assembly and insertion of beta-barrel proteins into the outer membrane. Nonessential member of the complex that stabilizes the interaction between the essential proteins BamA and BamD. Efficient substrate folding and insertion into the outer membrane requires all 5 subunits. A lateral gate may open between the first and last strands of the BamA beta-barrel that allows substrate to insert into the outer membrane; comparison of the structures of complete and nearly complete Bam complexes show there is considerable movement of all 5 proteins. In Escherichia coli (strain K12), this protein is Outer membrane protein assembly factor BamC.